The sequence spans 581 residues: Frizzled-3 (581 aa).

An N-terminal signal peptide occupies residues 1-19 (MYAASILILHLTWAVATIA). Over 20 to 237 (ANGAGHNGPV…TSSQKKTSET (218 aa)) the chain is Extracellular. The region spanning 35–156 (PNGLQCQPIA…PEKHELCMQI (122 aa)) is the FZ domain. Cystine bridges form between Cys-40–Cys-101, Cys-48–Cys-94, Cys-85–Cys-123, Cys-112–Cys-153, and Cys-116–Cys-141. N-linked (GlcNAc...) asparagine glycosylation is present at Asn-54. Asn-206 carries N-linked (GlcNAc...) asparagine glycosylation. A helical transmembrane segment spans residues 238–258 (LILGLSAVCFVLTLFALVTFW). The Cytoplasmic segment spans residues 259-270 (AEPTRFGYPERP). A helical membrane pass occupies residues 271 to 291 (VLFLCLCYNLFSVCYLERIVF). The Extracellular segment spans residues 292-321 (HNQARMHDVELQGRLMRPGCLLTPPCLASY). Residues 322 to 342 (ITTSYLSLCAASWWLIFALCF) form a helical membrane-spanning segment. Residues 343–359 (YLSSHKKWSSEALEKRS) are Cytoplasmic-facing. Residues 360-380 (GLFHVLAWVPPLAPPIAALLL) form a helical membrane-spanning segment. Topologically, residues 381 to 393 (EKVRPSELTGMCY) are extracellular. A helical transmembrane segment spans residues 394–414 (APGFVELPALVLLLLGLYFTL). The Cytoplasmic segment spans residues 415-442 (RASRSLLSLQQQLQPTLAHHRFGQIRKR). The helical transmembrane segment at 443-463 (FVLFSLLYFAPTTAGVVAALC) threads the bilayer. Over 464–488 (ERYADSVPSCSTPDDCLSPTPLSAW) the chain is Extracellular. Residues 489-509 (PALVRIFFQLVGGTLTGLWVW) form a helical membrane-spanning segment. Topologically, residues 510-581 (SRKTCESYRN…PVYNPNQSRV (72 aa)) are cytoplasmic. The PDZ-binding signature appears at 579–581 (SRV).

Belongs to the G-protein coupled receptor Fz/Smo family. Wing, leg and eye imaginal disks. In embryos, expressed is seen in brain, proventriculus, Malpighian tubules, anal plate and visceral mesoderm of parasegment 8.

The protein localises to the membrane. In terms of biological role, receptor for Wnt proteins. Most of frizzled receptors are coupled to the beta-catenin canonical signaling pathway, which leads to the activation of disheveled proteins, inhibition of GSK-3 kinase, nuclear accumulation of beta-catenin and activation of Wnt target genes. A second signaling pathway involving PKC and calcium fluxes has been seen for some family members, but it is not yet clear if it represents a distinct pathway or if it can be integrated in the canonical pathway, as PKC seems to be required for Wnt-mediated inactivation of GSK-3 kinase. Both pathways seem to involve interactions with G-proteins. Required to coordinate the cytoskeletons of epidermal cells to produce a parallel array of cuticular hairs and bristles. In Drosophila melanogaster (Fruit fly), this protein is Frizzled-3 (fz3).